The following is a 25-amino-acid chain: Alpha-amylase inhibitor (25 aa).

In terms of assembly, monomer or homodimer. In terms of processing, may exist both in a glycosylated and in an unglycosylated form.

It is found in the secreted. Its function is as follows. Inhibits alpha-amylases but not trypsin. Is more effective against insect alpha-amylases than those of mammals. The polypeptide is Alpha-amylase inhibitor (Secale cereale (Rye)).